Here is a 554-residue protein sequence, read N- to C-terminus: Inactive serine/threonine-protein kinase/endoribonuclease IRE1-like (554 aa).

An N-terminal signal peptide occupies residues Met1–Cys17. Positions Lys36–Pro85 are disordered. Residues Asp51–Asp63 are compositionally biased toward basic and acidic residues. A Protein kinase domain is found at Leu121–Phe408. Lys150 lines the ATP pocket. Residues Ser411–Asn554 enclose the KEN domain.

It belongs to the protein kinase superfamily. Ser/Thr protein kinase family.

This chain is Inactive serine/threonine-protein kinase/endoribonuclease IRE1-like, found in Arabidopsis thaliana (Mouse-ear cress).